A 187-amino-acid polypeptide reads, in one-letter code: Peptide deformylase (187 aa).

The Fe cation site is built by Cys94 and His136. Residue Glu137 is part of the active site. Residue His140 coordinates Fe cation.

It belongs to the polypeptide deformylase family. The cofactor is Fe(2+).

The enzyme catalyses N-terminal N-formyl-L-methionyl-[peptide] + H2O = N-terminal L-methionyl-[peptide] + formate. Functionally, removes the formyl group from the N-terminal Met of newly synthesized proteins. Requires at least a dipeptide for an efficient rate of reaction. N-terminal L-methionine is a prerequisite for activity but the enzyme has broad specificity at other positions. This chain is Peptide deformylase, found in Chlorobaculum tepidum (strain ATCC 49652 / DSM 12025 / NBRC 103806 / TLS) (Chlorobium tepidum).